Here is a 251-residue protein sequence, read N- to C-terminus: Sugar fermentation stimulation protein homolog (251 aa).

This sequence belongs to the SfsA family.

This chain is Sugar fermentation stimulation protein homolog, found in Prochlorococcus marinus (strain SARG / CCMP1375 / SS120).